The following is a 332-amino-acid chain: Ribosomal RNA small subunit methyltransferase H (332 aa).

S-adenosyl-L-methionine-binding positions include 36–38 (GGY), Asp54, Phe81, Asp102, and Gln109. Residues 295–322 (PRARSAKLRGAERTESPAHAAGDLPGWP) form a disordered region.

The protein belongs to the methyltransferase superfamily. RsmH family.

Its subcellular location is the cytoplasm. The enzyme catalyses cytidine(1402) in 16S rRNA + S-adenosyl-L-methionine = N(4)-methylcytidine(1402) in 16S rRNA + S-adenosyl-L-homocysteine + H(+). Specifically methylates the N4 position of cytidine in position 1402 (C1402) of 16S rRNA. The polypeptide is Ribosomal RNA small subunit methyltransferase H (Rhodopseudomonas palustris (strain ATCC BAA-98 / CGA009)).